We begin with the raw amino-acid sequence, 131 residues long: Small ribosomal subunit protein eS8 (131 aa).

The interval 1–42 (MKLGAYYKGGDLKKPSGGKKRKVRKTKKKALGGGPPQIPKLG) is disordered. The segment covering 16 to 30 (SGGKKRKVRKTKKKA) has biased composition (basic residues).

The protein belongs to the eukaryotic ribosomal protein eS8 family. As to quaternary structure, part of the 30S ribosomal subunit.

The chain is Small ribosomal subunit protein eS8 from Pyrobaculum aerophilum (strain ATCC 51768 / DSM 7523 / JCM 9630 / CIP 104966 / NBRC 100827 / IM2).